Here is a 343-residue protein sequence, read N- to C-terminus: Phosphoribosylformylglycinamidine cyclo-ligase (343 aa).

This sequence belongs to the AIR synthase family.

The protein resides in the cytoplasm. It carries out the reaction 2-formamido-N(1)-(5-O-phospho-beta-D-ribosyl)acetamidine + ATP = 5-amino-1-(5-phospho-beta-D-ribosyl)imidazole + ADP + phosphate + H(+). Its pathway is purine metabolism; IMP biosynthesis via de novo pathway; 5-amino-1-(5-phospho-D-ribosyl)imidazole from N(2)-formyl-N(1)-(5-phospho-D-ribosyl)glycinamide: step 2/2. This Parasynechococcus marenigrum (strain WH8102) protein is Phosphoribosylformylglycinamidine cyclo-ligase.